Reading from the N-terminus, the 331-residue chain is MDQSSSGGSMGGRLPFNQSFWEEFLMGREGHLPALPEISHVSKSVVRILGGNPGSMHLQGTNTYLVGTGRSRILIDTAQGLPVWISRISSFLYTQKIELSYVLLTHWHGDHTGGVPDLISQNSSLSNRIYKNRPDSGQNPITHGQIFSVAGATVRAILTPGHSVDHMCFLLEEENALFTGDNVLGHGFSVAQDLGRYMDSLRDMASLGCRIGYPAHGAVIEKLPGKLEEYIQHREGRERMMLSALTRQRVQGEGVREGGVKCGLTLNEIVMVIYGRLPQEVIEKALAPSLLQVLWKLTEDRMVGFKPGDPLKRQWFALEQKKRNKVRGCPS.

Zn(2+) is bound by residues His-106, His-108, Asp-110, and His-111. Asp-110 functions as the Proton donor/acceptor in the catalytic mechanism.

It belongs to the metallo-beta-lactamase superfamily. Zn(2+) serves as cofactor.

It functions in the pathway secondary metabolite biosynthesis. Functionally, lactamase-like protein; part of the gene cluster that mediates the biosynthesis of neosartoricin B, a prenylated anthracenone that probably exhibits T-cell antiproliferative activity, suggestive of a physiological role as an immunosuppressive agent. The non-reducing polyketide synthase nscA probably synthesizes and cyclizes the decaketide backbone. The hydrolase nscB then mediates the product release through hydrolysis followed by spontaneous decarboxylation. The prenyltransferase nscD catalyzes the addition of the dimethylallyl group to the aromatic C5. The FAD-dependent monooxygenase nscC is then responsible for the stereospecific hydroxylation at C2. Neosartoricin B can be converted into two additional compounds neosartoricins C and D. Neosartoricin C is a spirocyclic compound that is cyclized through the attack of C3 hydroxyl on C14, followed by dehydration. On the other hand, neosartoricin D is a further cyclized compound in which attack of C2 on C14 in neosartoricin C results in the formation of the acetal-containing dioxabicyclo-octanone ring. Both of these compounds are novel and possibly represent related metabolites of the gene cluster. In Trichophyton equinum (strain ATCC MYA-4606 / CBS 127.97) (Horse ringworm fungus), this protein is Lactamase-like protein nscB.